We begin with the raw amino-acid sequence, 259 residues long: Hydroxyethylthiazole kinase (259 aa).

Residue Met37 participates in substrate binding. ATP-binding residues include Arg113 and Thr158. Gly185 lines the substrate pocket.

The protein belongs to the Thz kinase family. The cofactor is Mg(2+).

It catalyses the reaction 5-(2-hydroxyethyl)-4-methylthiazole + ATP = 4-methyl-5-(2-phosphooxyethyl)-thiazole + ADP + H(+). The protein operates within cofactor biosynthesis; thiamine diphosphate biosynthesis; 4-methyl-5-(2-phosphoethyl)-thiazole from 5-(2-hydroxyethyl)-4-methylthiazole: step 1/1. Functionally, catalyzes the phosphorylation of the hydroxyl group of 4-methyl-5-beta-hydroxyethylthiazole (THZ). The polypeptide is Hydroxyethylthiazole kinase (Helicobacter pylori (strain ATCC 700392 / 26695) (Campylobacter pylori)).